A 141-amino-acid chain; its full sequence is Small ribosomal subunit protein uS12 (141 aa).

It belongs to the universal ribosomal protein uS12 family. In terms of assembly, part of the 30S ribosomal subunit.

In terms of biological role, with S4 and S5 plays an important role in translational accuracy. Located at the interface of the 30S and 50S subunits. This chain is Small ribosomal subunit protein uS12, found in Methanosphaera stadtmanae (strain ATCC 43021 / DSM 3091 / JCM 11832 / MCB-3).